Reading from the N-terminus, the 429-residue chain is Enolase (429 aa).

Residue Q163 participates in (2R)-2-phosphoglycerate binding. E205 functions as the Proton donor in the catalytic mechanism. Residues D242, E285, and D312 each coordinate Mg(2+). Residues K337, R366, S367, and K388 each coordinate (2R)-2-phosphoglycerate. Catalysis depends on K337, which acts as the Proton acceptor.

This sequence belongs to the enolase family. It depends on Mg(2+) as a cofactor.

The protein resides in the cytoplasm. Its subcellular location is the secreted. The protein localises to the cell surface. It catalyses the reaction (2R)-2-phosphoglycerate = phosphoenolpyruvate + H2O. Its pathway is carbohydrate degradation; glycolysis; pyruvate from D-glyceraldehyde 3-phosphate: step 4/5. Its function is as follows. Catalyzes the reversible conversion of 2-phosphoglycerate (2-PG) into phosphoenolpyruvate (PEP). It is essential for the degradation of carbohydrates via glycolysis. This is Enolase from Methylorubrum populi (strain ATCC BAA-705 / NCIMB 13946 / BJ001) (Methylobacterium populi).